Consider the following 342-residue polypeptide: Holliday junction branch migration complex subunit RuvB (342 aa).

Residues 1 to 185 (MRKDYLNSNK…FGINTRLAYY (185 aa)) form a large ATPase domain (RuvB-L) region. Residues L24, R25, G66, K69, T70, T71, 132–134 (EDF), R175, Y185, and R222 contribute to the ATP site. T70 is a binding site for Mg(2+). The tract at residues 186-256 (DVTLLTQIVK…IAQMALKALD (71 aa)) is small ATPAse domain (RuvB-S). Residues 259–342 (EDGLDEMDNR…PPQRAGTLFE (84 aa)) form a head domain (RuvB-H) region. DNA-binding residues include R314 and R319.

This sequence belongs to the RuvB family. In terms of assembly, homohexamer. Forms an RuvA(8)-RuvB(12)-Holliday junction (HJ) complex. HJ DNA is sandwiched between 2 RuvA tetramers; dsDNA enters through RuvA and exits via RuvB. An RuvB hexamer assembles on each DNA strand where it exits the tetramer. Each RuvB hexamer is contacted by two RuvA subunits (via domain III) on 2 adjacent RuvB subunits; this complex drives branch migration. In the full resolvosome a probable DNA-RuvA(4)-RuvB(12)-RuvC(2) complex forms which resolves the HJ.

The protein resides in the cytoplasm. The enzyme catalyses ATP + H2O = ADP + phosphate + H(+). Functionally, the RuvA-RuvB-RuvC complex processes Holliday junction (HJ) DNA during genetic recombination and DNA repair, while the RuvA-RuvB complex plays an important role in the rescue of blocked DNA replication forks via replication fork reversal (RFR). RuvA specifically binds to HJ cruciform DNA, conferring on it an open structure. The RuvB hexamer acts as an ATP-dependent pump, pulling dsDNA into and through the RuvAB complex. RuvB forms 2 homohexamers on either side of HJ DNA bound by 1 or 2 RuvA tetramers; 4 subunits per hexamer contact DNA at a time. Coordinated motions by a converter formed by DNA-disengaged RuvB subunits stimulates ATP hydrolysis and nucleotide exchange. Immobilization of the converter enables RuvB to convert the ATP-contained energy into a lever motion, pulling 2 nucleotides of DNA out of the RuvA tetramer per ATP hydrolyzed, thus driving DNA branch migration. The RuvB motors rotate together with the DNA substrate, which together with the progressing nucleotide cycle form the mechanistic basis for DNA recombination by continuous HJ branch migration. Branch migration allows RuvC to scan DNA until it finds its consensus sequence, where it cleaves and resolves cruciform DNA. The sequence is that of Holliday junction branch migration complex subunit RuvB from Amoebophilus asiaticus (strain 5a2).